The sequence spans 205 residues: Nitrophorin-4 (205 aa).

Positions 1–21 are cleaved as a signal peptide; it reads MKSYTSLLAVAILCLFGGVNG. 2 disulfide bridges follow: C23–C143 and C62–C192. H80 contacts heme.

It belongs to the calycin superfamily. Nitrophorin family. It depends on heme b as a cofactor. As to expression, salivary gland (at protein level).

It is found in the secreted. It catalyses the reaction 3 nitrite + 2 H(+) = 2 nitric oxide + nitrate + H2O. Functionally, heme-based protein that delivers nitric oxide gas (NO) to the victim while feeding, resulting in vasodilation and inhibition of platelet aggregation. Reversibly binds nitric oxide (NO). Also binds tightly to histamine, which is released by the host to induce wound healing. NO release is pH dependent and linked to loop dynamics. In Rhodnius prolixus (Triatomid bug), this protein is Nitrophorin-4.